The sequence spans 311 residues: CD-NTase-associated protein 12 (311 aa).

In terms of domain architecture, TIR spans 4–121 (RIFIGSSKEG…LLGITVPQFE (118 aa)). Positions 157-311 (STVLAIGYFY…RNIVKIIQEE (155 aa)) are STING domain. 3 residues coordinate 3',3'-c-di-GMP: phenylalanine 168, proline 232, and aspartate 249.

In the C-terminal section; belongs to the bacterial STING family. As to quaternary structure, forms homodimers; in the presence of c-di-GMP forms filaments with an ordered array of parallel-stacked subunits.

The catalysed reaction is NAD(+) + H2O = ADP-D-ribose + nicotinamide + H(+). With respect to regulation, NAD(+) hydrolase activity is strongly stimulated by c-di-GMP, weakly by 3'3'-cGAMP, very weakly by c-di-AMP but not at all by 2'3'-cGAMP. Self-association of TIR domains is required for NADase activity. In terms of biological role, effector protein of a CBASS antiviral system with NAD(+) hydrolase activity. CBASS (cyclic oligonucleotide-based antiphage signaling system) provides immunity against bacteriophage. The CD-NTase protein synthesizes cyclic nucleotides in response to infection; these serve as specific second messenger signals. The signals activate a diverse range of effectors, leading to bacterial cell death and thus abortive phage infection. A type I-D CBASS(GG) system. Functionally, binds c-di-GMP, does not bind cUMP-AMP. Upon activation by c-di-GMP forms filaments which hydrolyze NAD(+); filament formation is required for enzyme activation. The chain is CD-NTase-associated protein 12 from Flavobacterium daejeonense.